Here is a 530-residue protein sequence, read N- to C-terminus: Chaperonin GroEL, chloroplastic (530 aa).

Residues 29 to 32 (TLGP), 86 to 90 (DGTTT), G414, 480 to 482 (DAL), and D496 contribute to the ATP site.

This sequence belongs to the chaperonin (HSP60) family. In terms of assembly, forms a cylinder of 14 subunits composed of two heptameric rings stacked back-to-back. Interacts with the co-chaperonin GroES.

The protein resides in the plastid. Its subcellular location is the chloroplast. It catalyses the reaction ATP + H2O + a folded polypeptide = ADP + phosphate + an unfolded polypeptide.. Its function is as follows. Together with its co-chaperonin GroES, plays an essential role in assisting protein folding. The GroEL-GroES system forms a nano-cage that allows encapsulation of the non-native substrate proteins and provides a physical environment optimized to promote and accelerate protein folding. The protein is Chaperonin GroEL, chloroplastic of Cyanidium caldarium (Red alga).